A 465-amino-acid polypeptide reads, in one-letter code: Casein kinase 1-like protein 2 (465 aa).

The region spanning 9-277 (FRLGRKIGGG…LKRLFRDLFI (269 aa)) is the Protein kinase domain. ATP-binding positions include 15-23 (IGGGSFGEI) and lysine 38. Residue aspartate 128 is the Proton acceptor of the active site. Disordered regions lie at residues 300 to 344 (STPP…GIPR) and 396 to 428 (REAAVLGTDSEPSNPQIVEAGSGSNSKIPVSRN). Over residues 405–428 (SEPSNPQIVEAGSGSNSKIPVSRN) the composition is skewed to polar residues.

Belongs to the protein kinase superfamily. CK1 Ser/Thr protein kinase family. Casein kinase I subfamily. Monomer. Post-translationally, autophosphorylated.

It localises to the cytoplasm. The protein localises to the nucleus. The enzyme catalyses L-seryl-[protein] + ATP = O-phospho-L-seryl-[protein] + ADP + H(+). It carries out the reaction L-threonyl-[protein] + ATP = O-phospho-L-threonyl-[protein] + ADP + H(+). Casein kinases are operationally defined by their preferential utilization of acidic proteins such as caseins as substrates. It can phosphorylate a large number of proteins. The chain is Casein kinase 1-like protein 2 from Arabidopsis thaliana (Mouse-ear cress).